Consider the following 757-residue polypeptide: MKHPLFNQKVLAGFVSMLLISGSAFASNNEKSEMTKPKGAVGTGVALENQARTNQFWWPDQLNLSALRDHDKRSNPYGENFDYAKAFNSLDLDKVKLDINALLTTSQDWWPSDYSNYGPFFIRMTWHSAGTYRTLDGRGGAGGGQQRFEPLNSWPDNASLDKARRLLWPIKMKYGEAISWSDLIVLAGNVSLENMGFKTYGFAGGRHDDWEPDMVYWGPEIEMLASDREDNGGKLQRPLGATHMGLIYVNPEGPKGVPDPLGSAKNIRVAFERMAMNDEETLALIAGGHTFGKMHGAHKPKDCLGAEPAAAGIEEQGLGWKNKCGKGHSEDTITSGLEGAWTQAPTKWTSLYLSNLLTFEWKQTRSPAGAIQWIPTDESLHKAVPDAHVKGKFHAPVMTTADLALKYDPEYRKIAERFLADPEEYRLAFAKAWYKLTHRDMGPSRNFLGKEVPKESLIWQDPIDDKTQSNIDADGVQELKAQILKSNLTVSELVRVAWASAASYRHSDMRGGANGARIALSPQKDWSVNNPAETAKVIKTLKAIQEDYNDSLFSKSKVSLADLIVLGGTAAIEKAAKDAGFTVSVPFNAGRGDATQAMTDINAFSLLELTSDGFRNYFDAQQSYKSPVDMLVDKADQLNLSVPEMTVLVGGLRALDANYKGLKHGVLTSTPGTLNNDFFVNLLDMSTVWKKSSTDGIYEGFDRQSGHKKWTATSVDLVFGSNSELRAVSEVYAFDTSKQKFVEDFAAAWTKVMNLDR.

The N-terminal stretch at 1 to 26 (MKHPLFNQKVLAGFVSMLLISGSAFA) is a signal peptide. The tryptophyl-tyrosyl-methioninium (Trp-Tyr) (with M-274) cross-link spans 126-248 (WHSAGTYRTL…LGATHMGLIY (123 aa)). The Proton acceptor role is filled by His-127. The tryptophyl-tyrosyl-methioninium (Tyr-Met) (with W-126) cross-link spans 248-274 (YVNPEGPKGVPDPLGSAKNIRVAFERM). His-289 is a heme b binding site.

Belongs to the peroxidase family. Peroxidase/catalase subfamily. Homodimer or homotetramer. The cofactor is heme b. In terms of processing, formation of the three residue Trp-Tyr-Met cross-link is important for the catalase, but not the peroxidase activity of the enzyme.

The enzyme catalyses H2O2 + AH2 = A + 2 H2O. It catalyses the reaction 2 H2O2 = O2 + 2 H2O. Functionally, bifunctional enzyme with both catalase and broad-spectrum peroxidase activity. The polypeptide is Catalase-peroxidase 2 (Shewanella frigidimarina (strain NCIMB 400)).